Reading from the N-terminus, the 416-residue chain is Caspase-9 (416 aa).

Residues Met1 to Asn92 enclose the CARD domain. Position 125 is a phosphothreonine; by MAPK1 (Thr125). Tyr153 is modified (phosphotyrosine; by ABL1). Residues His237 and Cys287 contribute to the active site. Residues His294–Gln320 form a disordered region. 3 positions are modified to phosphoserine: Ser302, Ser307, and Ser310. Residues Ala316 to Asp330 constitute a propeptide that is removed on maturation. A (Microbial infection) ADP-riboxanated arginine modification is found at Arg355.

Belongs to the peptidase C14A family. Heterotetramer that consists of two anti-parallel arranged heterodimers, each one formed by a 35 kDa (p35) and a 10 kDa (p10) subunit. Caspase-9 and APAF1 bind to each other via their respective NH2-terminal CED-3 homologous domains in the presence of cytochrome C and ATP. Interacts (inactive form) with EFHD2. Interacts with HAX1. Interacts with BIRC2/c-IAP1, XIAP/BIRC4, BIRC5/survivin, BIRC6/bruce and BIRC7/livin. Interacts with ABL1 (via SH3 domain); the interaction is direct and increases in the response of cells to genotoxic stress and ABL1/c-Abl activation. Interacts with BCL2L10. Interacts with NleF from pathogenic E.coli. Cleavages at Asp-315 by granzyme B and at Asp-330 by caspase-3 generate the two active subunits. Caspase-8 and -10 can also be involved in these processing events. In terms of processing, phosphorylated at Thr-125 by MAPK1/ERK2. Phosphorylation at Thr-125 is sufficient to block caspase-9 processing and subsequent caspase-3 activation. Phosphorylation on Tyr-153 by ABL1/c-Abl; occurs in the response of cells to DNA damage. Post-translationally, (Microbial infection) ADP-riboxanation by C.violaceum CopC blocks CASP9 processing, preventing CASP9 activation and ability to mediate intrinsic apoptosis. Ubiquitinated by BIRC6; this activity is inhibited by DIABLO/SMAC. As to expression, ubiquitous, with highest expression in the heart, moderate expression in liver, skeletal muscle, and pancreas. Low levels in all other tissues. Within the heart, specifically expressed in myocytes.

The enzyme catalyses Strict requirement for an Asp residue at position P1 and with a marked preference for His at position P2. It has a preferred cleavage sequence of Leu-Gly-His-Asp-|-Xaa.. Its activity is regulated as follows. Inhibited by the effector protein NleF that is produced by pathogenic E.coli; this inhibits apoptosis. Inhibited by BIRC6; following inhibition of BIRC6-caspase binding by DIABLO/SMAC, BIRC6 is subjected to caspase cleavage, leading to an increase in active caspases. Involved in the activation cascade of caspases responsible for apoptosis execution. Binding of caspase-9 to Apaf-1 leads to activation of the protease which then cleaves and activates effector caspases caspase-3 (CASP3) or caspase-7 (CASP7). Promotes DNA damage-induced apoptosis in a ABL1/c-Abl-dependent manner. Proteolytically cleaves poly(ADP-ribose) polymerase (PARP). Cleaves BIRC6 following inhibition of BIRC6-caspase binding by DIABLO/SMAC. Functionally, lacks activity is an dominant-negative inhibitor of caspase-9. This is Caspase-9 (CASP9) from Homo sapiens (Human).